A 153-amino-acid chain; its full sequence is Partner of bursicon (153 aa).

Residues 1–35 (MCNSVRTALAASNCCSIVLCCVLLLTLTLTVAVTA) form the signal peptide. Intrachain disulfides connect C44–C102, C68–C117, C77–C143, C81–C145, and C99–C148. The region spanning 44–139 (CETLPSEIHL…SATMEIRLKE (96 aa)) is the CTCK domain.

As to quaternary structure, heterodimer of burs and pburs.

The protein resides in the secreted. In terms of biological role, final heterodimeric neurohormone released at the end of the molting cycle, involved in the sclerotization (tanning) of the insect cuticle, melanization and wing spreading. This is Partner of bursicon from Anopheles gambiae (African malaria mosquito).